A 265-amino-acid polypeptide reads, in one-letter code: UDP-N-acetylenolpyruvoylglucosamine reductase (265 aa).

Positions 15–169 (GVGGPAELWT…TRVRLKLKER (155 aa)) constitute an FAD-binding PCMH-type domain. Arginine 149 is an active-site residue. Residues 182 to 203 (DRARKGQPKRKSAGCAFKNPPG) form a disordered region. Cysteine 196 (proton donor) is an active-site residue.

The protein belongs to the MurB family. FAD serves as cofactor.

The protein localises to the cytoplasm. It carries out the reaction UDP-N-acetyl-alpha-D-muramate + NADP(+) = UDP-N-acetyl-3-O-(1-carboxyvinyl)-alpha-D-glucosamine + NADPH + H(+). The protein operates within cell wall biogenesis; peptidoglycan biosynthesis. Functionally, cell wall formation. This is UDP-N-acetylenolpyruvoylglucosamine reductase from Thermus thermophilus (strain ATCC BAA-163 / DSM 7039 / HB27).